The chain runs to 101 residues: Large ribosomal subunit protein bL21 (101 aa).

This sequence belongs to the bacterial ribosomal protein bL21 family. As to quaternary structure, part of the 50S ribosomal subunit. Contacts protein L20.

In terms of biological role, this protein binds to 23S rRNA in the presence of protein L20. The protein is Large ribosomal subunit protein bL21 of Corynebacterium glutamicum (strain R).